Reading from the N-terminus, the 445-residue chain is uncharacterized protein (445 aa).

Transmembrane regions (helical) follow at residues 16 to 36 (IVSL…AFLI), 52 to 72 (LLAS…GYLL), 98 to 118 (VHSL…AGGC), 168 to 188 (GLMF…LGIV), 219 to 239 (ASAL…VWLI), 243 to 263 (GWSV…GALG), 283 to 303 (LIAA…NEGS), and 366 to 386 (AAYP…VPLV). The tract at residues 417-445 (AWPNGPRRPGPPGQPRRVRQGGTAITPPT) is disordered.

Belongs to the major facilitator superfamily.

Its subcellular location is the cell membrane. This is an uncharacterized protein from Mycobacterium tuberculosis (strain ATCC 25618 / H37Rv).